Reading from the N-terminus, the 155-residue chain is Protein-export protein SecB (155 aa).

Belongs to the SecB family. As to quaternary structure, homotetramer, a dimer of dimers. One homotetramer interacts with 1 SecA dimer.

It localises to the cytoplasm. In terms of biological role, one of the proteins required for the normal export of preproteins out of the cell cytoplasm. It is a molecular chaperone that binds to a subset of precursor proteins, maintaining them in a translocation-competent state. It also specifically binds to its receptor SecA. This is Protein-export protein SecB from Shigella sonnei (strain Ss046).